Reading from the N-terminus, the 286-residue chain is Secretory carrier-associated membrane protein 2 (286 aa).

Basic and acidic residues-rich tracts occupy residues 1–10 (MAGRYDRNPF) and 54–63 (STKDMKKKEK). Residues 1–63 (MAGRYDRNPF…STKDMKKKEK (63 aa)) form a disordered region. The Cytoplasmic segment spans residues 1–126 (MAGRYDRNPF…LQRMQYLAFS (126 aa)). Residues 52–89 (LDSTKDMKKKEKELQAKEAELNKRESELRRREEAASRA) are a coiled coil. A run of 4 helical transmembrane segments spans residues 127–147 (SLLGLAACLFWNIIATTAAWI), 152–172 (VMIWLLAIIYFISGVPGAYVL), 189–209 (FGWFFLFYLIHILFCIWSAVA), and 237–257 (IFYFIGFGLFCLESLLSVVVI). At 258-286 (QQVYMYFRGSGKAAEMKREAARGAMRSAF) the chain is on the cytoplasmic side.

It belongs to the SCAMP family.

It is found in the cell membrane. The protein localises to the cytoplasmic vesicle. It localises to the secretory vesicle membrane. Functionally, probably involved in membrane trafficking. The polypeptide is Secretory carrier-associated membrane protein 2 (SCAMP2) (Oryza sativa subsp. japonica (Rice)).